The sequence spans 338 residues: NAD kinase (338 aa).

Asp-66 (proton acceptor) is an active-site residue. Residues 66-67, Arg-71, 141-142, Lys-152, Asp-171, 182-187, and Ala-206 contribute to the NAD(+) site; these read DG, ND, and TAYAFS. Positions 317-338 are disordered; that stretch reads GDAGVAGTEPDKPGERDGKAGA. Residues 325-338 are compositionally biased toward basic and acidic residues; the sequence is EPDKPGERDGKAGA.

It belongs to the NAD kinase family. It depends on a divalent metal cation as a cofactor.

It localises to the cytoplasm. The enzyme catalyses NAD(+) + ATP = ADP + NADP(+) + H(+). In terms of biological role, involved in the regulation of the intracellular balance of NAD and NADP, and is a key enzyme in the biosynthesis of NADP. Catalyzes specifically the phosphorylation on 2'-hydroxyl of the adenosine moiety of NAD to yield NADP. The sequence is that of NAD kinase from Bifidobacterium longum subsp. infantis (strain ATCC 15697 / DSM 20088 / JCM 1222 / NCTC 11817 / S12).